A 282-amino-acid polypeptide reads, in one-letter code: Parvulin-like PPIase (282 aa).

The N-terminal stretch at Met1–Cys20 is a signal peptide. Residues Lys138–Glu231 form the PpiC domain.

It belongs to the PpiC/parvulin rotamase family.

It is found in the cell outer membrane. It catalyses the reaction [protein]-peptidylproline (omega=180) = [protein]-peptidylproline (omega=0). The protein is Parvulin-like PPIase (plp) of Rickettsia typhi (strain ATCC VR-144 / Wilmington).